The sequence spans 516 residues: Myocyte-specific enhancer factor 2A homolog (516 aa).

Residues 1–100 (MGRKKIQITR…KGLNGCESPD (100 aa)) form an interaction with hdac9 region. The MADS-box domain maps to 3–57 (RKKIQITRIMDERNRQVTFTKRKFGLMKKAYELSVLCDCEIALIIFNSSNKLFQY). Positions 58-86 (ASTDMDKVLLKYTEYNEPHESRTNSDIVE) form a DNA-binding region, mef2-type. The interval 318–339 (PSSKGMMPPLNTQRVTSSQGTQ) is disordered. Residues 327 to 339 (LNTQRVTSSQGTQ) are compositionally biased toward polar residues. Position 343 is a phosphothreonine; by NLK (threonine 343). Serine 386 bears the Phosphoserine; by NLK mark. Residues 420 to 433 (GSNLSINTNQNINI) show a composition bias toward polar residues. The tract at residues 420–516 (GSNLSINTNQ…KRMRMDAWVT (97 aa)) is disordered. Residues 465-475 (DSLSSSSSSYD) are compositionally biased toward low complexity. Composition is skewed to basic and acidic residues over residues 476 to 486 (GSDREDVRNDF) and 497 to 516 (NNEDRDSPSVKRMRMDAWVT).

It belongs to the MEF2 family. As to quaternary structure, interacts with hdac9 and nlk2. As to expression, restricted to the somitic mesoderm of early embryos. Expressed in the head region of neurula stage embryos and in body muscle (myotomes) of the tadpole. Expressed in all tissues examined in the adult.

The protein localises to the nucleus. In terms of biological role, may regulate muscle-specific transcription in the embryo and may regulate transcription of a variety of cell types in the adult. Binds to the sequence 5'-CTA[TA]4TAR-3'. Acts downstream of nlk2 in anterior neural development, including eye formation. This is Myocyte-specific enhancer factor 2A homolog (mef2a) from Xenopus laevis (African clawed frog).